Reading from the N-terminus, the 279-residue chain is MLGGRHSHWSPQDLEEQAFSPYGTFPPSPTESTETSSSISSTRPRVNPRIVSDAILGLSDGLTVPFALSAGLSALGNSRVVVVGGLAELVAGAISMGLGGYVGSRSEVESYEATVRETKHLVKASPMETMNIIHQVFAPYNLPEEPVARMSHILYNSPEKLLDFLLTFYHKESKPGCHQAWISAITLALGYFIGGFIPLIPYFMVDQVLVALYYSIGIMIFTLLVFGYVKTCVVRGWTGKENIVAGIKGGLQMVVVGGLAAGASIALARAINPTGGALF.

The disordered stretch occupies residues 1–44 (MLGGRHSHWSPQDLEEQAFSPYGTFPPSPTESTETSSSISSTRP). Residues 30–44 (TESTETSSSISSTRP) are compositionally biased toward low complexity. 5 helical membrane-spanning segments follow: residues 55–75 (ILGL…LSAL), 80–100 (VVVV…GLGG), 185–205 (ITLA…YFMV), 208–228 (VLVA…VFGY), and 243–263 (IVAG…AAGA).

This sequence belongs to the CCC1 family.

It localises to the vacuole membrane. It catalyses the reaction Fe(2+)(in) = Fe(2+)(out). Vacuolar iron transporter involved in the transfer of iron from the cytosol to the vacuole for intracellular iron storage. Plays an essential role in iron detoxification during high iron conditions. In Arthroderma benhamiae (strain ATCC MYA-4681 / CBS 112371) (Trichophyton mentagrophytes), this protein is Vacuolar iron transporter cccA.